Here is a 95-residue protein sequence, read N- to C-terminus: Acylphosphatase (95 aa).

An Acylphosphatase-like domain is found at 5–93; sequence RAHLYIKGKV…GEFQDFRILP (89 aa). Residues R20 and N38 contribute to the active site.

The protein belongs to the acylphosphatase family.

The catalysed reaction is an acyl phosphate + H2O = a carboxylate + phosphate + H(+). This is Acylphosphatase (acyP) from Pyrobaculum islandicum (strain DSM 4184 / JCM 9189 / GEO3).